The sequence spans 745 residues: GTPase-activating protein GYP7 (745 aa).

The region spanning 391–623 (LADDATRKEV…NIWEVFFTDF (233 aa)) is the Rab-GAP TBC domain.

Functionally, most effectively accelerate the intrinsic GTPase activity of YPT7. It is also active, but to a lesser extent, on YPT31, YPT32 and YPT1. YPT6 and SEC4. The chain is GTPase-activating protein GYP7 (GYP7) from Candida glabrata (strain ATCC 2001 / BCRC 20586 / JCM 3761 / NBRC 0622 / NRRL Y-65 / CBS 138) (Yeast).